The primary structure comprises 604 residues: UvrABC system protein C (604 aa).

The region spanning 12–90 (TAPGVYLMRD…IKQHQPRYNL (79 aa)) is the GIY-YIG domain. The UVR domain maps to 200 to 235 (KDLVSGFRQRMKEAAEGLHYEEAARWRDLLKAIDTT).

Belongs to the UvrC family. As to quaternary structure, interacts with UvrB in an incision complex.

The protein localises to the cytoplasm. In terms of biological role, the UvrABC repair system catalyzes the recognition and processing of DNA lesions. UvrC both incises the 5' and 3' sides of the lesion. The N-terminal half is responsible for the 3' incision and the C-terminal half is responsible for the 5' incision. The chain is UvrABC system protein C from Trichlorobacter lovleyi (strain ATCC BAA-1151 / DSM 17278 / SZ) (Geobacter lovleyi).